We begin with the raw amino-acid sequence, 358 residues long: Putative UDP-kanosamine synthase oxidoreductase subunit (358 aa).

In terms of assembly, interacts with RifK.

It carries out the reaction UDP-alpha-D-glucose + NAD(+) = UDP-3-oxo-alpha-D-glucose + NADH + H(+). It participates in antibiotic biosynthesis; rifamycin B biosynthesis. Its function is as follows. In a complex with RifK, RifL may catalyze the oxidation of UDP-glucose to UDP-3-keto-D-glucose, which would then be used by RifK to produce UDP-kanosamine. Is not able to use dTDP-glucose as substrate. This chain is Putative UDP-kanosamine synthase oxidoreductase subunit (rifL), found in Amycolatopsis mediterranei (strain S699) (Nocardia mediterranei).